A 137-amino-acid polypeptide reads, in one-letter code: Acidic phospholipase A2 1 (137 aa).

An N-terminal signal peptide occupies residues 1–11 (LVAVCVSLLGA). Residues 12–19 (ANIPPQPL) constitute a propeptide that is removed on maturation. 7 cysteine pairs are disulfide-bonded: Cys-30–Cys-89, Cys-44–Cys-136, Cys-46–Cys-62, Cys-61–Cys-117, Cys-68–Cys-110, Cys-78–Cys-103, and Cys-96–Cys-108. Residues Tyr-45, Gly-47, and Gly-49 each contribute to the Ca(2+) site. Residues Gly-49 and His-65 each contribute to the tridecanoate site. The active site involves His-65. A Ca(2+)-binding site is contributed by Asp-66. Residue Asp-111 is part of the active site.

As to quaternary structure, monomer. It depends on Ca(2+) as a cofactor. Expressed by the venom gland.

The protein resides in the secreted. The enzyme catalyses a 1,2-diacyl-sn-glycero-3-phosphocholine + H2O = a 1-acyl-sn-glycero-3-phosphocholine + a fatty acid + H(+). Snake venom phospholipase A2 (PLA2) that shows anticoagulant and neurotoxic activities. PLA2 catalyzes the calcium-dependent hydrolysis of the 2-acyl groups in 3-sn-phosphoglycerides. This Bungarus caeruleus (Indian krait) protein is Acidic phospholipase A2 1.